We begin with the raw amino-acid sequence, 239 residues long: Small ribosomal subunit protein uS3 (239 aa).

The KH type-2 domain occupies 39 to 107 (IRAALMKTLK…EVLINIVEVR (69 aa)). The disordered stretch occupies residues 214–239 (AQDKKMAEQDHGGGGGDRRRRDRDAA).

Belongs to the universal ribosomal protein uS3 family. As to quaternary structure, part of the 30S ribosomal subunit. Forms a tight complex with proteins S10 and S14.

In terms of biological role, binds the lower part of the 30S subunit head. Binds mRNA in the 70S ribosome, positioning it for translation. This is Small ribosomal subunit protein uS3 from Methylocella silvestris (strain DSM 15510 / CIP 108128 / LMG 27833 / NCIMB 13906 / BL2).